The primary structure comprises 185 residues: Bcl-2-modifying factor (185 aa).

The segment at 1 to 28 (MEPPQCVEELEDDVFQSEDGEPGTQPGG) is disordered. Residues 8-21 (EELEDDVFQSEDGE) are compositionally biased toward acidic residues. Residues 67 to 75 (DKATQTLSP) form an interaction with DLC2 region. A BH3 motif is present at residues 134–148 (IARKLQCIADQFHRL).

It belongs to the Bcl-2 family. As to quaternary structure, interacts with MCL1, BCL2, BCL2L1/BCL-Xl, BCL2A1 and BCL2L2/BCL-w. Interacts with the myosin V actin motor complex through its binding to DLC2. In terms of tissue distribution, widely expressed with an abundant expression in pancreas, liver kidney and hematopoietic tissues.

May play a role in apoptosis. This Mus musculus (Mouse) protein is Bcl-2-modifying factor (Bmf).